The primary structure comprises 268 residues: MKVQPVLVNKDNYSYLVIDEKNKVAIAIDPCEPNKVISSLSSISSDIKINSVFTTHHHWDHAGGNNLIKTIIKDINVYGRDERFEGITKKLENNEVLKIGSLKIKTLDAPAHTSSHVLYLIEDENEPNQVKSLFTGDTLFIGGCGRLFEGNPEQMYNALYNVIGKLPDNTLVYVGHEYTLKNLEFAKTLESENENKELYNFYDQCKEKLANGEFTVPSSIAQEKLINPFMRCHLPSIYNHYLKENPNSINPPSPIDVLGFIRSLKDKF.

Residues His56, His58, Asp60, His61, His112, Asp137, and His176 each contribute to the Zn(2+) site. Residue 176–178 (HEY) coordinates substrate.

It belongs to the metallo-beta-lactamase superfamily. Glyoxalase II family. In terms of assembly, monomer. Requires Zn(2+) as cofactor.

The catalysed reaction is an S-(2-hydroxyacyl)glutathione + H2O = a 2-hydroxy carboxylate + glutathione + H(+). The protein operates within secondary metabolite metabolism; methylglyoxal degradation; (R)-lactate from methylglyoxal: step 2/2. Its function is as follows. Thiolesterase that catalyzes the hydrolysis of S-D-lactoyl-glutathione to form glutathione and D-lactic acid. This Dictyostelium discoideum (Social amoeba) protein is Hydroxyacylglutathione hydrolase (hagh).